The primary structure comprises 160 residues: Nucleotide-binding protein BAV0791 (160 aa).

This sequence belongs to the YajQ family.

Functionally, nucleotide-binding protein. This is Nucleotide-binding protein BAV0791 from Bordetella avium (strain 197N).